Consider the following 538-residue polypeptide: MRHVQAEPSPSSEPEAGPSQPPVRQGALQGGLLMGYSPAGGATSPGVYQVSIFSPPAGTSEPHRALKRQAPPTEGPRELKRGPGLGAREGLPPEEPSTVGLLGPEGLGLGLGVASQHFSHRGLCVVEQRSSVTSSWTSGAWSPPCPPSNASCNTLHTRDWASPDPGGQGSLGESPGPAPPGQLHTLDTDLHSLAQIGGKSPVAGVGNGGSLWPRESPGTANGHSPEHTPPGPGPPGPCPTKRRLLPAGEAPDVSSEEEGPAPRRRRGSLGHPTAANSSDAKATPFWSHLLPGPKEPVLDPTDCGPMGRRLKGARRLKLSPLRSLRKGPGLLSPPSASPVPTPAVSRTLLGSFEESLLRGRFAPSGHIEGFTAEIGASGSYCPQHVTLPVTVTFFDVSEQNAPAPFLGIVDLNPLGRKGYSVPKVGTIQVTLFNPNQTVVKMFLVTFDFSDMPAAHMTFLRHRLFLVPVGEEGNANPTHRLLCYLLHLRFRSSRSGRLSLHGDIRLLFSRRSLELDTGLPYELQAVTEAPHNPRYSPLP.

Low complexity predominate over residues 1–18 (MRHVQAEPSPSSEPEAGP). 4 disordered regions span residues 1–103 (MRHV…GLLG), 153–185 (NTLHTRDWASPDPGGQGSLGESPGPAPPGQLHT), 197–300 (GGKS…VLDP), and 323–342 (SLRKGPGLLSPPSASPVPTP). Residues 227–238 (HTPPGPGPPGPC) show a composition bias toward pro residues. S254 and S255 each carry phosphoserine. Over residues 323 to 334 (SLRKGPGLLSPP) the composition is skewed to low complexity. The tract at residues 348 to 430 (LLGSFEESLL…VPKVGTIQVT (83 aa)) is required for macropage invasion. The segment at 436 to 444 (QTVVKMFLV) is transactivation domain 1 (TAD1).

The protein belongs to the ATOS family.

Its subcellular location is the nucleus. In terms of biological role, transcription regulator that may syncronize transcriptional and translational programs. In Pongo abelii (Sumatran orangutan), this protein is Atos homolog protein B.